The chain runs to 307 residues: Protein YIF1A (307 aa).

The disordered stretch occupies residues 1-42; it reads MNFQQQGYRATKPRARASPPTGGPMLFDDTSSGPPPMNNQNY. The Cytoplasmic portion of the chain corresponds to 1 to 148; that stretch reads MNFQQQGYRA…TPRHDVNAPD (148 aa). The helical transmembrane segment at 149 to 169 threads the bilayer; that stretch reads LYIPTMAFITYILLAGMALGI. Over 170-184 the chain is Lumenal; it reads QKRFSPEVLGLCAST. The helical transmembrane segment at 185 to 205 threads the bilayer; it reads ALVWMIIEVLVMLLSLYLLTV. Over 206–213 the chain is Cytoplasmic; it reads HTDLSTFD. The chain crosses the membrane as a helical span at residues 214–236; that stretch reads LVAYSGYKYVGMILTVFCGLLFG. Topologically, residues 237-239 are lumenal; it reads SDG. The chain crosses the membrane as a helical span at residues 240-259; the sequence is YYVALAWSSCALMFFIVRSL. At 260–285 the chain is on the cytoplasmic side; the sequence is KMKILSSISADSMGAGASAKPRFRLY. Residues 286–306 traverse the membrane as a helical segment; the sequence is ITVASAAFQPFIIYWLTAHLV.

The protein belongs to the YIF1 family.

The protein localises to the endoplasmic reticulum membrane. It localises to the golgi apparatus membrane. The protein resides in the endoplasmic reticulum-Golgi intermediate compartment membrane. Functionally, possible role in transport between endoplasmic reticulum and Golgi. The sequence is that of Protein YIF1A (yif1a) from Danio rerio (Zebrafish).